A 209-amino-acid polypeptide reads, in one-letter code: Na(+)-translocating NADH-quinone reductase subunit D (209 aa).

5 helical membrane passes run 42-62 (LVMT…ISLI), 66-86 (IPGS…VIVV), 103-123 (VFVG…AYAM), 131-151 (FMDG…VGFL), and 178-198 (NGLF…IWGL).

Belongs to the NqrDE/RnfAE family. Composed of six subunits; NqrA, NqrB, NqrC, NqrD, NqrE and NqrF.

The protein resides in the cell inner membrane. It catalyses the reaction a ubiquinone + n Na(+)(in) + NADH + H(+) = a ubiquinol + n Na(+)(out) + NAD(+). Its function is as follows. NQR complex catalyzes the reduction of ubiquinone-1 to ubiquinol by two successive reactions, coupled with the transport of Na(+) ions from the cytoplasm to the periplasm. NqrA to NqrE are probably involved in the second step, the conversion of ubisemiquinone to ubiquinol. The sequence is that of Na(+)-translocating NADH-quinone reductase subunit D from Proteus mirabilis (strain HI4320).